Consider the following 236-residue polypeptide: Phosphoribosylaminoimidazole-succinocarboxamide synthase (236 aa).

This sequence belongs to the SAICAR synthetase family.

It carries out the reaction 5-amino-1-(5-phospho-D-ribosyl)imidazole-4-carboxylate + L-aspartate + ATP = (2S)-2-[5-amino-1-(5-phospho-beta-D-ribosyl)imidazole-4-carboxamido]succinate + ADP + phosphate + 2 H(+). Its pathway is purine metabolism; IMP biosynthesis via de novo pathway; 5-amino-1-(5-phospho-D-ribosyl)imidazole-4-carboxamide from 5-amino-1-(5-phospho-D-ribosyl)imidazole-4-carboxylate: step 1/2. The sequence is that of Phosphoribosylaminoimidazole-succinocarboxamide synthase from Rickettsia typhi (strain ATCC VR-144 / Wilmington).